Consider the following 577-residue polypeptide: PTS system lactose-specific EIICB component (577 aa).

One can recognise a PTS EIIC type-3 domain in the interval 4-405 (VFDKLKPVFE…VLDVAIYFPF (402 aa)). 9 helical membrane-spanning segments follow: residues 27 to 47 (GFIACMPIIIFSSIFMMVAYV), 63 to 83 (LMVAYNYSMGLLALFVAGTTA), 100 to 120 (INPVAVIVASEISFVILSILP), 133 to 153 (QGLICAYIVGLIVPNIYYVCI), 176 to 196 (LIPMGLSVTAFWLFGVGFKAA), 219 to 239 (YLGLALIAGAMAFFWFCGVQG), 280 to 300 (VMNFGGTGATLVVPFIMLFAA), 326 to 346 (FGMPIIMNPMLFIPFLATPIV), and 386 to 406 (LAFVFVLLTLVLDVAIYFPFI). Residues 476 to 577 (EVDVLVLCAG…MALDFVESNL (102 aa)) enclose the PTS EIIB type-3 domain. Residue Cys-483 is the Phosphocysteine intermediate; for EIIB activity of the active site. Cys-483 is subject to Phosphocysteine; by EIIA.

The protein resides in the cell membrane. The catalysed reaction is lactose(out) + N(pros)-phospho-L-histidyl-[protein] = lactose 6-phosphate(in) + L-histidyl-[protein]. The phosphoenolpyruvate-dependent sugar phosphotransferase system (sugar PTS), a major carbohydrate active transport system, catalyzes the phosphorylation of incoming sugar substrates concomitantly with their translocation across the cell membrane. The enzyme II LacEF PTS system is involved in lactose transport. The protein is PTS system lactose-specific EIICB component of Lacticaseibacillus casei (Lactobacillus casei).